The following is a 268-amino-acid chain: Forkhead box protein R1 (268 aa).

Residues 91 to 126 are disordered; sequence EDSCSEASEVQQPLPPCRQKRKQRRSTVPLPLAPGR. The segment at residues 149-248 is a DNA-binding region (fork-head); the sequence is RPPLHYFHLI…KEARTLASTQ (100 aa).

Expressed in adult germ cells (at protein level). Expressed in heart, liver, lung and embryonic brain.

It localises to the nucleus. The protein resides in the cytoplasm. The protein localises to the perinuclear region. Its function is as follows. Transcription factor which acts as both an activator and a repressor. Activates transcription of a number of genes including the heat shock chaperones HSPA1A and HSPA6 and the antioxidant NADPH-dependent reductase DHRS2 which are involved in protection against oxidative stress. Required for normal brain development. In Mus musculus (Mouse), this protein is Forkhead box protein R1 (Foxr1).